We begin with the raw amino-acid sequence, 340 residues long: N-acetyl-gamma-glutamyl-phosphate reductase (340 aa).

Cysteine 146 is a catalytic residue.

This sequence belongs to the NAGSA dehydrogenase family. Type 1 subfamily.

The protein localises to the cytoplasm. The enzyme catalyses N-acetyl-L-glutamate 5-semialdehyde + phosphate + NADP(+) = N-acetyl-L-glutamyl 5-phosphate + NADPH + H(+). It participates in amino-acid biosynthesis; L-arginine biosynthesis; N(2)-acetyl-L-ornithine from L-glutamate: step 3/4. In terms of biological role, catalyzes the NADPH-dependent reduction of N-acetyl-5-glutamyl phosphate to yield N-acetyl-L-glutamate 5-semialdehyde. The sequence is that of N-acetyl-gamma-glutamyl-phosphate reductase from Streptococcus thermophilus (strain CNRZ 1066).